The sequence spans 224 residues: MLSTGVKSLDELLGGGIAPEVLTQVYGSFATGKTTLAVQIGLLSGGKVAYVDTEGGFSPERLAQMAESRGLDPEEALQRFILFTPADFKEQRRTIGSLKKIVDKSFSLIVVDSITAHYRVEEQRKNLTAELGKQLQVLLWLARKLGIPVIVINQVHFDSRAERMKPVAEHTLGYRCKDILRLDKLNTPGLRVALLERHRFRPEGGMVYFRITEKGIEDVLGREE.

The protein belongs to the eukaryotic RecA-like protein family. RadB subfamily.

Functionally, involved in DNA repair and in homologous recombination. May regulate the cleavage reactions of the branch-structured DNA. Has a very weak ATPase activity that is not stimulated by DNA. Binds DNA but does not promote DNA strands exchange. This Thermococcus onnurineus (strain NA1) protein is DNA repair and recombination protein RadB.